The sequence spans 286 residues: 4-diphosphocytidyl-2-C-methyl-D-erythritol kinase (286 aa).

Lysine 11 is a catalytic residue. 93 to 103 serves as a coordination point for ATP; sequence PFGAGLGGGSS. Aspartate 135 is an active-site residue.

It belongs to the GHMP kinase family. IspE subfamily.

The catalysed reaction is 4-CDP-2-C-methyl-D-erythritol + ATP = 4-CDP-2-C-methyl-D-erythritol 2-phosphate + ADP + H(+). Its pathway is isoprenoid biosynthesis; isopentenyl diphosphate biosynthesis via DXP pathway; isopentenyl diphosphate from 1-deoxy-D-xylulose 5-phosphate: step 3/6. Functionally, catalyzes the phosphorylation of the position 2 hydroxy group of 4-diphosphocytidyl-2C-methyl-D-erythritol. This chain is 4-diphosphocytidyl-2-C-methyl-D-erythritol kinase, found in Prosthecochloris aestuarii (strain DSM 271 / SK 413).